The chain runs to 539 residues: MAISDMPESTGTTATTATMPHGGSDLRRRHNATETTEVSDSNSKTTDPDSGNSVRESVRVRDSSTDESLARKSCEDDGSRSEVVIESANPVTNGNDGGEKIANGEDRRTDFAAVKLAYRPSVPAHRRIKESPLSSDAIFRQSHAGLFNLCIVVLVAVNSRLIIENLMKYGWLIKTGFWFSSRSLRDWPLLMCCLTLPIFPAAAFVVEKLVQWKYISEPVVLLLHFIITTAALLYPVFVILRCDSVVLSGVTLMLFACIVWLKLVSYTHTNYDMRALAKSIDKGDVLPNSLNTDYPYSVSFKSLAYFMVAPTLCYQTSYPRTACIRKSWVVRQLVKLIIFTGVMGFIIEQYINPIVKNSQHPLKGNLLYAIERVLKLSVPNLYVWLCMFYCFFHLWLNILAELLRFGDREFYKDWWNAKTVEEYWRLWNMPVHKWMVRHIYFPCLRNGIPKGVAILIAFFVSAIFHELCIAVPCHIFKLWAFIGIMCQVPLVLITNYLQNKFRNSMVGNMIFWFFFCILGQPMCVLLYYHDLMNRKGKTE.

The disordered stretch occupies residues 1 to 104; it reads MAISDMPEST…NDGGEKIANG (104 aa). The span at 33–52 shows a compositional bias: polar residues; that stretch reads TETTEVSDSNSKTTDPDSGN. Over residues 56 to 80 the composition is skewed to basic and acidic residues; the sequence is ESVRVRDSSTDESLARKSCEDDGSR. The next 7 membrane-spanning stretches (helical) occupy residues 143-163, 187-207, 219-239, 244-264, 294-314, 334-354, and 383-403; these read HAGL…RLII, WPLL…FVVE, VVLL…VFVI, SVVL…LKLV, YPYS…TLCY, VKLI…INPI, and VWLC…AELL. An FYXDWWN motif motif is present at residues 410 to 416; the sequence is FYKDWWN. 3 consecutive transmembrane segments (helical) span residues 451-471, 473-493, and 506-526; these read GVAI…CIAV, CHIF…LVLI, and VGNM…CVLL. H465 is a catalytic residue.

The protein belongs to the membrane-bound acyltransferase family. Sterol o-acyltransferase subfamily.

It localises to the endoplasmic reticulum membrane. The enzyme catalyses an acyl-CoA + a 1,2-diacyl-sn-glycerol = a triacyl-sn-glycerol + CoA. It functions in the pathway glycerolipid metabolism; triacylglycerol biosynthesis. Major contributor to triacylglycerol (TAG) synthesis and oil accumulation in developing seeds. Catalyzes the acylation of the sn-3 hydroxy group of sn-1,2-diacylglycerol using acyl-CoA. Has a marked preference for oleoyl-CoA as substrate. This Corylus americana (American hazelnut) protein is Diacylglycerol O-acyltransferase 1.